The chain runs to 1782 residues: Signal-induced proliferation-associated 1-like protein 1 (1782 aa).

Disordered stretches follow at residues 1–28 (MTSL…GAPK), 47–125 (GSSV…VSLN), and 140–171 (KNKT…RRIR). A compositionally biased stretch (basic and acidic residues) spans 84 to 94 (PPRKENVKESS). Residues 95-125 (RSSQEIETSSCLESLSSKGSPVSQGSSVSLN) show a composition bias toward low complexity. Phosphoserine is present on residues Ser-162, Ser-187, Ser-193, Ser-208, Ser-255, and Ser-288. The tract at residues 277–297 (EREKPLKRRSKSETGDSSIFR) is disordered. The Rap-GAP domain occupies 599–816 (LMKLDEQGLN…RTRQEYLKDL (218 aa)). Positions 953-1031 (EMTLRRNGLG…VVIIPPHDDC (79 aa)) constitute a PDZ domain. Disordered stretches follow at residues 1069–1128 (QRNA…RLSP) and 1144–1213 (SQCR…SLAD). Ser-1078, Ser-1087, Ser-1116, Ser-1127, Ser-1149, Ser-1170, and Ser-1181 each carry phosphoserine. A compositionally biased stretch (polar residues) spans 1080 to 1093 (QVPSQLQSPMTSRL). Over residues 1149 to 1159 (SPSNLSSSSET) the composition is skewed to low complexity. A compositionally biased stretch (polar residues) spans 1186-1205 (DRQNTQSDISGSGKSTPSWQ). A phosphoserine mark is found at Ser-1234 and Ser-1249. Positions 1247-1285 (HLSPNKQGHSDSHYSSHSSSNTLSSNASSAHSDEKWYDG) are disordered. Low complexity predominate over residues 1261-1276 (SSHSSSNTLSSNASSA). Residue Ser-1305 is modified to Phosphoserine; by PLK2. Residues 1307-1342 (IDTASYGPSHGSTASLGASTSSPRSGPGKEKVAPLW) are disordered. At Thr-1309 the chain carries Phosphothreonine; by PLK2. Low complexity predominate over residues 1315–1328 (SHGSTASLGASTSS). Residue Ser-1328 is modified to Phosphoserine; by CDK5. At Ser-1345 the chain carries Phosphoserine. Positions 1358 to 1368 (TEGHGMDRKAE) are enriched in basic and acidic residues. The segment at 1358–1454 (TEGHGMDRKA…SSSGPRTFYP (97 aa)) is disordered. Residues Ser-1369, Ser-1370, Ser-1391, Ser-1410, and Ser-1412 each carry the phosphoserine modification. Residues 1378 to 1410 (KSQGGSSPLSRENSTFSINDAASHTSTMSSRHS) show a composition bias toward polar residues. Positions 1432–1447 (SSQLAPSFSSSSSSSS) are enriched in low complexity. Phosphoserine is present on residues Ser-1507 and Ser-1528. Thr-1530 carries the phosphothreonine modification. Residues Ser-1533, Ser-1544, Ser-1547, Ser-1564, and Ser-1567 each carry the phosphoserine modification. Asymmetric dimethylarginine is present on Arg-1580. Phosphoserine is present on residues Ser-1582, Ser-1624, Ser-1626, Ser-1629, Ser-1687, Ser-1690, Ser-1707, Ser-1708, and Ser-1712. The disordered stretch occupies residues 1625 to 1647 (ASDSSLTDIQETRRQPIPDPGLM). Residues 1713-1773 (PTLASKVDQL…ASDKLKKFTE (61 aa)) adopt a coiled-coil conformation.

Interacts with DLG4, PDLIM5, PDLIM7 and LZTS3. Interacts with the actin cytoskeleton. Interacts (via PDZ domain) with EPHA4 (via PDZ motif); controls neuronal morphology through regulation of the RAP1 (RAP1A or RAP1B) and RAP2 (RAP2A, RAP2B or RAP2C) GTPases. Ubiquitinated and degraded by the SCF(BTRC) following phosphorylation by PLK2. In terms of processing, phosphorylated at Ser-1328 by CDK5, creating a docking site for the POLO box domains of PLK2. Subsequently, PLK2 binds and phosphorylates SIPA1L1, leading to ubiquitination and degradation by the proteasome.

It is found in the cytoplasm. Its subcellular location is the cytoskeleton. The protein resides in the postsynaptic density. It localises to the synapse. The protein localises to the synaptosome. Stimulates the GTPase activity of RAP2A. Promotes reorganization of the actin cytoskeleton and recruits DLG4 to F-actin. Contributes to the regulation of dendritic spine morphogenesis. This chain is Signal-induced proliferation-associated 1-like protein 1 (Sipa1l1), found in Mus musculus (Mouse).